We begin with the raw amino-acid sequence, 148 residues long: Lysozyme C (148 aa).

Residues 1–18 (MKALIILGLVLLSVMVQA) form the signal peptide. A C-type lysozyme domain is found at 19-148 (KVFERCELAR…LRQYIQGCGV (130 aa)). Cystine bridges form between C24–C146, C48–C134, C83–C99, and C95–C113. Residues E53 and D71 contribute to the active site.

This sequence belongs to the glycosyl hydrolase 22 family. In terms of assembly, monomer.

The protein resides in the secreted. The enzyme catalyses Hydrolysis of (1-&gt;4)-beta-linkages between N-acetylmuramic acid and N-acetyl-D-glucosamine residues in a peptidoglycan and between N-acetyl-D-glucosamine residues in chitodextrins.. Its function is as follows. Lysozymes have primarily a bacteriolytic function; those in tissues and body fluids are associated with the monocyte-macrophage system and enhance the activity of immunoagents. The chain is Lysozyme C (LYZ) from Hylobates lar (Lar gibbon).